We begin with the raw amino-acid sequence, 222 residues long: MFSKQVTDSKVYQWFNDRLEIQAISDDITSKYVPPHVNIFYCLGGITLVCFLVQFATGFAMTFYYKPTVTEAFSSVQYIMNEVNFGWLIRSIHRWSASMMVLMMILHVFRVYLTGGFKKPRELTWMTGVILAVITVSFGVTGYSLPWDQVGYWAVKIVSGVPAAIPVVGDQMVELLRGGQSVGQATLTRFYSLHTFVFPWLIAVFMLAHFLMIRKQGISGPL.

The helical transmembrane segment at 39 to 59 (IFYCLGGITLVCFLVQFATGF) threads the bilayer. C42 lines the heme c pocket. Heme b is bound by residues H93 and H107. 3 helical membrane passes run 97 to 117 (ASMM…TGGF), 123 to 143 (LTWM…VTGY), and 193 to 213 (LHTF…FLMI). Residues H194 and H209 each coordinate heme b.

It belongs to the cytochrome b family. PetB subfamily. As to quaternary structure, the 4 large subunits of the cytochrome b6-f complex are cytochrome b6, subunit IV (17 kDa polypeptide, PetD), cytochrome f and the Rieske protein, while the 4 small subunits are PetG, PetL, PetM and PetN. The complex functions as a dimer. It depends on heme b as a cofactor. Heme c serves as cofactor.

Its subcellular location is the cellular thylakoid membrane. Functionally, component of the cytochrome b6-f complex, which mediates electron transfer between photosystem II (PSII) and photosystem I (PSI), cyclic electron flow around PSI, and state transitions. This chain is Cytochrome b6, found in Crocosphaera subtropica (strain ATCC 51142 / BH68) (Cyanothece sp. (strain ATCC 51142)).